Here is a 463-residue protein sequence, read N- to C-terminus: Probable multidrug resistance protein YoeA (463 aa).

A run of 12 helical transmembrane segments spans residues Leu24–Met44, Val56–Ile76, Phe106–Leu126, Ala143–Leu163, Ile177–Phe197, Ile202–Val222, Val256–Val276, Val293–Ala313, Val330–Ser350, Leu370–Thr390, Val397–Phe417, and Ile427–Gly447.

Belongs to the multi antimicrobial extrusion (MATE) (TC 2.A.66.1) family.

Its subcellular location is the cell membrane. This Bacillus subtilis (strain 168) protein is Probable multidrug resistance protein YoeA (yoeA).